Consider the following 201-residue polypeptide: Dephospho-CoA kinase (201 aa).

Residues 4–201 enclose the DPCK domain; sequence SVGLTGNIAS…KYLREAKIKQ (198 aa). ATP is bound at residue 12–17; the sequence is ASGKST.

Belongs to the CoaE family.

It is found in the cytoplasm. The catalysed reaction is 3'-dephospho-CoA + ATP = ADP + CoA + H(+). The protein operates within cofactor biosynthesis; coenzyme A biosynthesis; CoA from (R)-pantothenate: step 5/5. Catalyzes the phosphorylation of the 3'-hydroxyl group of dephosphocoenzyme A to form coenzyme A. This chain is Dephospho-CoA kinase, found in Legionella pneumophila (strain Lens).